A 319-amino-acid polypeptide reads, in one-letter code: GATA transcription factor 18 (319 aa).

Residues 1–15 (MPDAAAAAAAAQDAD) show a composition bias toward low complexity. The interval 1 to 74 (MPDAAAAAAA…AAPEPVSALL (74 aa)) is disordered. Residues 31–60 (DNDDDDGDDGTEEDEEEDDDEEGDEEELPP) show a composition bias toward acidic residues. One can recognise a Tify domain in the interval 74–109 (LPGSPNQLTLLFQGEVYVFESVTPEKVQAVLLLLGR). A CCT domain is found at 143-185 (RVASLIRFREKRKERNFDKKIRYAVRKEVALRMQRRKGQFAGR). The GATA-type zinc finger occupies 215–242 (CQNCGTSEKMTPAMRRGPAGPRTLCNAC). A disordered region spans residues 292–319 (ITASHGEVMGDSTPANEAEIGAPKAQSQ).

Belongs to the type IV zinc-finger family. Class C subfamily.

It is found in the nucleus. Its function is as follows. Transcriptional activator that specifically binds 5'-GATA-3' or 5'-GAT-3' motifs within gene promoters. This is GATA transcription factor 18 from Oryza sativa subsp. japonica (Rice).